Consider the following 662-residue polypeptide: DNA ligase (662 aa).

Residues 31–35 (DKDYD) and 79–80 (SL) each bind NAD(+). Catalysis depends on Lys121, which acts as the N6-AMP-lysine intermediate. The NAD(+) site is built by Arg143, Glu177, and Lys313. Zn(2+) contacts are provided by Cys406, Cys409, Cys422, and Cys428. Positions 586 to 662 (VLESPFMGKT…LSEEEFENMI (77 aa)) constitute a BRCT domain.

It belongs to the NAD-dependent DNA ligase family. LigA subfamily. Mg(2+) is required as a cofactor. The cofactor is Mn(2+).

It carries out the reaction NAD(+) + (deoxyribonucleotide)n-3'-hydroxyl + 5'-phospho-(deoxyribonucleotide)m = (deoxyribonucleotide)n+m + AMP + beta-nicotinamide D-nucleotide.. In terms of biological role, DNA ligase that catalyzes the formation of phosphodiester linkages between 5'-phosphoryl and 3'-hydroxyl groups in double-stranded DNA using NAD as a coenzyme and as the energy source for the reaction. It is essential for DNA replication and repair of damaged DNA. This chain is DNA ligase, found in Clostridium perfringens (strain 13 / Type A).